Here is a 432-residue protein sequence, read N- to C-terminus: MTTSATLFSRAQQVIPGGVNSPVRAFKGVGGTPVFIEKANGAYIFDTEGKQYIDYVGSWGPMILGHNHPSILSAVLKTAENGLSFGTPTPLEIELAELICQLVPSIEMVRMVNSGTEATMSAIRLARGYTKRDKILKFEGCYHGHSDSLLVKAGSGSLTLGQPSSPGVPEDFAKHTITCEYNNLQSVKNAFEQYPDQIACVIVEPVAGNMNCILPKQDFLQGLRQLCNEYGSLFIIDEVMTGFRVALGGAQSYYEVTPDLTTLGKVIGGGMPVGAFGGKKEIMQYIAPTGPVYQAGTLSGNPIAMSAGIACLNELKKEGNEQRLAMLTKKLALGLKNLANQHNIPLVVNYVGGMFGIFFTTQNEVTSYQQAIQCDVEKFNLFFHKMLEQGVYLAPSAFEAGFMSLAHTDADIDRTLQAADIAFASLCSSSFS.

Lysine 265 carries the N6-(pyridoxal phosphate)lysine modification.

Belongs to the class-III pyridoxal-phosphate-dependent aminotransferase family. HemL subfamily. As to quaternary structure, homodimer. Requires pyridoxal 5'-phosphate as cofactor.

It is found in the cytoplasm. It carries out the reaction (S)-4-amino-5-oxopentanoate = 5-aminolevulinate. It functions in the pathway porphyrin-containing compound metabolism; protoporphyrin-IX biosynthesis; 5-aminolevulinate from L-glutamyl-tRNA(Glu): step 2/2. In Histophilus somni (strain 129Pt) (Haemophilus somnus), this protein is Glutamate-1-semialdehyde 2,1-aminomutase.